Reading from the N-terminus, the 395-residue chain is MAKEKFDRSKEHANIGTIGHVDHGKTTLTAAIATVLAKNGDSVAQSYDMIDNAPEEKERGITINTSHIEYTTDKRHYAHVDCPGHADYVKNMITGAAQMDGAILVVSAADGPMPQTREHILLSRNVGVPALVVFLNKVDMVDDEELLELVEMEVRDLLSEYDFPGDDVPVISGSALKALEGDADYEQKILDLMQAVDDFIPTPERDSDKPFMMPVEDVFSITGRGTVATGRVERGQIKVGEEIEIIGMQEESSKTTVTGVEMFRKLLDYAEAGDNIGALLRGVSRDDVQRGQVLAAPGTITPHTKFKADVYVLSKDEGGRHTPFFTNYRPQFYFRTTDVTGVVNLPEGTEMVMPGDNVEMDVELISPIAIEDGTRFSIREGGRTVGSGVVTVINE.

The tr-type G domain occupies 10–204 (KEHANIGTIG…AVDDFIPTPE (195 aa)). Positions 19–26 (GHVDHGKT) are G1. Position 19 to 26 (19 to 26 (GHVDHGKT)) interacts with GTP. Thr-26 provides a ligand contact to Mg(2+). The tract at residues 60-64 (GITIN) is G2. Positions 81–84 (DCPG) are G3. GTP is bound by residues 81–85 (DCPGH) and 136–139 (NKVD). Residues 136-139 (NKVD) are G4. Residues 174-176 (SAL) are G5.

The protein belongs to the TRAFAC class translation factor GTPase superfamily. Classic translation factor GTPase family. EF-Tu/EF-1A subfamily. As to quaternary structure, monomer.

Its subcellular location is the cytoplasm. It carries out the reaction GTP + H2O = GDP + phosphate + H(+). Functionally, GTP hydrolase that promotes the GTP-dependent binding of aminoacyl-tRNA to the A-site of ribosomes during protein biosynthesis. The sequence is that of Elongation factor Tu from Staphylococcus saprophyticus subsp. saprophyticus (strain ATCC 15305 / DSM 20229 / NCIMB 8711 / NCTC 7292 / S-41).